The sequence spans 436 residues: 3-ketoacyl-CoA thiolase (436 aa).

Residue cysteine 99 is the Acyl-thioester intermediate of the active site. Active-site proton acceptor residues include histidine 392 and cysteine 422.

Belongs to the thiolase-like superfamily. Thiolase family. As to quaternary structure, heterotetramer of two alpha chains (FadJ) and two beta chains (FadI).

The protein localises to the cytoplasm. It carries out the reaction an acyl-CoA + acetyl-CoA = a 3-oxoacyl-CoA + CoA. It functions in the pathway lipid metabolism; fatty acid beta-oxidation. Catalyzes the final step of fatty acid oxidation in which acetyl-CoA is released and the CoA ester of a fatty acid two carbons shorter is formed. The sequence is that of 3-ketoacyl-CoA thiolase from Yersinia pseudotuberculosis serotype O:1b (strain IP 31758).